The primary structure comprises 179 residues: Large ribosomal subunit protein uL6 (179 aa).

Belongs to the universal ribosomal protein uL6 family. As to quaternary structure, part of the 50S ribosomal subunit.

Functionally, this protein binds to the 23S rRNA, and is important in its secondary structure. It is located near the subunit interface in the base of the L7/L12 stalk, and near the tRNA binding site of the peptidyltransferase center. The chain is Large ribosomal subunit protein uL6 from Chlorobium luteolum (strain DSM 273 / BCRC 81028 / 2530) (Pelodictyon luteolum).